We begin with the raw amino-acid sequence, 37 residues long: Esculentin-2L (37 aa).

Cysteine 31 and cysteine 37 form a disulfide bridge.

Expressed by the skin glands.

The protein resides in the secreted. Functionally, antibacterial activity against Gram-positive bacterium S.aureus and Gram-negative bacterium E.coli. Has activity against C.albicans. This is Esculentin-2L from Rana luteiventris (Columbia spotted frog).